Reading from the N-terminus, the 248-residue chain is NAD kinase (248 aa).

Residue D45 is the Proton acceptor of the active site. Residues 45–46 (DG), R50, 110–111 (NE), and D138 contribute to the NAD(+) site.

The protein belongs to the NAD kinase family. A divalent metal cation serves as cofactor.

It localises to the cytoplasm. The catalysed reaction is NAD(+) + ATP = ADP + NADP(+) + H(+). Its function is as follows. Involved in the regulation of the intracellular balance of NAD and NADP, and is a key enzyme in the biosynthesis of NADP. Catalyzes specifically the phosphorylation on 2'-hydroxyl of the adenosine moiety of NAD to yield NADP. The sequence is that of NAD kinase from Sulfurisphaera tokodaii (strain DSM 16993 / JCM 10545 / NBRC 100140 / 7) (Sulfolobus tokodaii).